Reading from the N-terminus, the 842-residue chain is Cation/H(+) antiporter 20 (842 aa).

12 helical membrane-spanning segments follow: residues 26–46, 55–75, 86–106, 122–142, 155–175, 193–213, 228–248, 283–303, 320–340, 353–373, 380–400, and 413–433; these read FPLLIVQTALIIAVSRFLAVL, VIAEIVGGILLGPSALGRNMA, MPILESVASIGLLFFLFLVGL, GIAVAGITLPFIAGVGVAFVI, YAEFLVFMGVALSITAFPVLA, MAAAAFNDVAAWILLALAVAL, LVSLWVLLSGAGFVVFMLVVI, FATDLIGIHSIFGAFVFGLTI, FVSGLLLPLYFATSGLKTDVA, LVVVTACAGKIVGTFVVAVMV, ALTLGFLMNTKGLVELIVLNI, and AILVLMALFTTFITTPTVMAI. Residues 585 to 595 are compositionally biased toward basic and acidic residues; sequence DHGHSHHHQDG. The disordered stretch occupies residues 585-605; that stretch reads DHGHSHHHQDGGGDGNVPENV.

It belongs to the monovalent cation:proton antiporter 2 (CPA2) transporter (TC 2.A.37) family. CHX (TC 2.A.37.4) subfamily. In terms of tissue distribution, expressed in leaves and stems. Preferentially expressed in guards cells.

It localises to the endomembrane system. Functionally, operates as a K(+)/H(+) antiporter that maintains K(+) homeostasis in guard cells and could regulate pH. Plays a critical role in osmoregulation through the control of stomates opening. The protein is Cation/H(+) antiporter 20 (CHX20) of Arabidopsis thaliana (Mouse-ear cress).